Consider the following 667-residue polypeptide: Zeaxanthin epoxidase, chloroplastic (667 aa).

A chloroplast-targeting transit peptide spans M1–K59. Residues R82 to E110 and G360 to D373 contribute to the FAD site. The FHA domain maps to C558–G612.

Requires FAD as cofactor. As to expression, expressed in leaves, stems and flowers, and at lower levels in roots and siliques.

It is found in the plastid. It localises to the chloroplast. The catalysed reaction is all-trans-zeaxanthin + 4 reduced [2Fe-2S]-[ferredoxin] + 2 O2 + 4 H(+) = all-trans-violaxanthin + 4 oxidized [2Fe-2S]-[ferredoxin] + 2 H2O. It functions in the pathway plant hormone biosynthesis; abscisate biosynthesis. In terms of biological role, zeaxanthin epoxidase that plays an important role in the xanthophyll cycle and abscisic acid (ABA) biosynthesis. Converts zeaxanthin into antheraxanthin and subsequently violaxanthin. Required for resistance to osmotic and drought stresses, ABA-dependent stomatal closure, seed development and dormancy, modulation of defense gene expression and disease resistance and non-photochemical quencing (NPQ). Through its role in ABA biosynthesis, regulates the expression of stress-responsive genes such as RD29A during osmotic stress and is required for normal plant growth during vegetative development. Is required for late skotomorphogenic growth through its role in the xanthophyll carotenoids neoxanthin, violaxanthin and antheraxanthin biosynthesis. Required for beta-aminobutyric acid (BABA)-induced priming in disease resistance, tolerance to salt and drought stresses and sterility. Participates in NPQ by regulating the level of zeaxanthin in photosynthetic energy conversion. NPQ is a process that maintains the balance between dissipation and utilization of light energy to minimize the generation of oxidizing molecules and the molecular damages they can generate. This is Zeaxanthin epoxidase, chloroplastic (ZEP) from Arabidopsis thaliana (Mouse-ear cress).